Reading from the N-terminus, the 143-residue chain is Hemoglobin subunit alpha (143 aa).

The region spanning 2–143 (RFSQDDEVLI…IVHVLISLYR (142 aa)) is the Globin domain. His60 is a binding site for O2. His89 is a heme b binding site.

Belongs to the globin family. In terms of assembly, heterotetramer of two alpha chains and two beta chains. As to expression, red blood cells.

In terms of biological role, involved in oxygen transport from the lung to the various peripheral tissues. This Lepidosiren paradoxus (South American lungfish) protein is Hemoglobin subunit alpha (HBA).